A 41-amino-acid polypeptide reads, in one-letter code: Photosystem I reaction center subunit IX (41 aa).

Residues 7–27 (YLSTAPVVALIWFTFTAGLLI) traverse the membrane as a helical segment.

It belongs to the PsaJ family.

Its subcellular location is the plastid. It is found in the chloroplast thylakoid membrane. May help in the organization of the PsaE and PsaF subunits. The chain is Photosystem I reaction center subunit IX from Pleurastrum terricola (Filamentous green alga).